We begin with the raw amino-acid sequence, 172 residues long: Translocator protein 2 (172 aa).

5 helical membrane passes run 3–23 (PQGA…SLLT), 45–65 (VLLA…YLVW), 80–100 (LGLY…FFAA), 104–124 (GLAL…ALIW), and 130–150 (LAAV…SIAY).

The protein belongs to the TspO/BZRP family. In terms of assembly, homotetramer. May also form homodimer. As to expression, expressed in erythrocytes (at protein level).

Its subcellular location is the endoplasmic reticulum membrane. It localises to the cell membrane. Its function is as follows. Cholesterol-binding protein involved in the redistribution of cholesterol from lipid droplets to the endoplasmic reticulum. Required to meet cholesterol demands during erythropoietic differentiation. May play a role in transport processes at the plasma membrane of erythrocytes, including regulating VDAC-mediated ATP export, and import of the heme precursors protoporphyrin IX and 5-aminolevulinic acid. The protein is Translocator protein 2 of Canis lupus familiaris (Dog).